The sequence spans 280 residues: Shikimate dehydrogenase (NADP(+)) (280 aa).

Residues 20–22 (TLS) and threonine 67 each bind shikimate. Lysine 71 functions as the Proton acceptor in the catalytic mechanism. Positions 92 and 107 each coordinate shikimate. NADP(+) is bound by residues 131–135 (GAGGA), 154–159 (NRTIDK), and leucine 224. Tyrosine 226 is a shikimate binding site. Residue glycine 247 participates in NADP(+) binding.

The protein belongs to the shikimate dehydrogenase family. In terms of assembly, homodimer.

It carries out the reaction shikimate + NADP(+) = 3-dehydroshikimate + NADPH + H(+). The protein operates within metabolic intermediate biosynthesis; chorismate biosynthesis; chorismate from D-erythrose 4-phosphate and phosphoenolpyruvate: step 4/7. Involved in the biosynthesis of the chorismate, which leads to the biosynthesis of aromatic amino acids. Catalyzes the reversible NADPH linked reduction of 3-dehydroshikimate (DHSA) to yield shikimate (SA). This chain is Shikimate dehydrogenase (NADP(+)), found in Carboxydothermus hydrogenoformans (strain ATCC BAA-161 / DSM 6008 / Z-2901).